The primary structure comprises 577 residues: Isocitrate dehydrogenase kinase/phosphatase (577 aa).

ATP-binding positions include 318 to 324 (APGVRGM) and K339. Residue D374 is part of the active site.

Belongs to the AceK family.

The protein localises to the cytoplasm. It catalyses the reaction L-seryl-[isocitrate dehydrogenase] + ATP = O-phospho-L-seryl-[isocitrate dehydrogenase] + ADP + H(+). Functionally, bifunctional enzyme which can phosphorylate or dephosphorylate isocitrate dehydrogenase (IDH) on a specific serine residue. This is a regulatory mechanism which enables bacteria to bypass the Krebs cycle via the glyoxylate shunt in response to the source of carbon. When bacteria are grown on glucose, IDH is fully active and unphosphorylated, but when grown on acetate or ethanol, the activity of IDH declines drastically concomitant with its phosphorylation. The polypeptide is Isocitrate dehydrogenase kinase/phosphatase (Pseudomonas aeruginosa (strain UCBPP-PA14)).